Reading from the N-terminus, the 121-residue chain is uncharacterized protein (121 aa).

This is an uncharacterized protein from Streptococcus pyogenes serotype M6 (strain ATCC BAA-946 / MGAS10394).